We begin with the raw amino-acid sequence, 221 residues long: Orotate phosphoribosyltransferase (221 aa).

A 5-phospho-alpha-D-ribose 1-diphosphate-binding site is contributed by K26. Position 34–35 (34–35 (FF)) interacts with orotate. 5-phospho-alpha-D-ribose 1-diphosphate is bound by residues 72 to 73 (YK), R98, K99, K102, H104, and 123 to 131 (DDVISAGTS). Positions 127 and 155 each coordinate orotate.

This sequence belongs to the purine/pyrimidine phosphoribosyltransferase family. PyrE subfamily. As to quaternary structure, homodimer. Requires Mg(2+) as cofactor.

The enzyme catalyses orotidine 5'-phosphate + diphosphate = orotate + 5-phospho-alpha-D-ribose 1-diphosphate. It functions in the pathway pyrimidine metabolism; UMP biosynthesis via de novo pathway; UMP from orotate: step 1/2. Catalyzes the transfer of a ribosyl phosphate group from 5-phosphoribose 1-diphosphate to orotate, leading to the formation of orotidine monophosphate (OMP). The chain is Orotate phosphoribosyltransferase from Janthinobacterium sp. (strain Marseille) (Minibacterium massiliensis).